A 248-amino-acid polypeptide reads, in one-letter code: MYHKEFELFYSFISVSSVEVGKHLYWTIGNYRIHGQVFIVSWLVMIVLISLAIAGTRNLTRTPQKFQNFMEFILEFLQDIAKNQIGEHEYRFWIPYISTIFLFILGSNWAGALIPWKLITLPEGELAAPTNDINTTVALALLTSLAYFYAGLSKNGIGYFSRYIEPTPVLLPINILEDFTKPLSLSFRLFGNVLADELVVSVFTLLVPILIPLPVMILGLFASSIQALIFSTLSAAYIGEALEGHGEE.

The next 5 helical transmembrane spans lie at 35–55 (GQVF…AIAG), 94–114 (IPYI…GALI), 133–153 (INTT…AGLS), 202–222 (VFTL…GLFA), and 224–244 (SIQA…ALEG).

The protein belongs to the ATPase A chain family. As to quaternary structure, F-type ATPases have 2 components, CF(1) - the catalytic core - and CF(0) - the membrane proton channel. CF(1) has five subunits: alpha(3), beta(3), gamma(1), delta(1), epsilon(1). CF(0) has four main subunits: a, b, b' and c.

It localises to the plastid. The protein localises to the chloroplast thylakoid membrane. Its function is as follows. Key component of the proton channel; it plays a direct role in the translocation of protons across the membrane. The sequence is that of ATP synthase subunit a, chloroplastic from Antithamnion sp. (Red alga).